Reading from the N-terminus, the 68-residue chain is Figainin 1 (68 aa).

Residues 1-22 (MAFLKKSLFLVLFLGLVSLSIG) form the signal peptide. A disordered region spans residues 23–45 (EEEKREEEEKNEEGANQEENAEN). Residues 23-47 (EEEKREEEEKNEEGANQEENAENKE) constitute a propeptide that is removed on maturation. Residues 26-42 (KREEEEKNEEGANQEEN) are compositionally biased toward acidic residues. The residue at position 67 (lysine 67) is a Lysine amide.

As to expression, expressed by the skin glands.

It is found in the secreted. Its function is as follows. Antimicrobial peptide that displays antibacterial and antiprotozoal activity. Exhibits antibacterial activity against the Gram-positive bacteria S.epidermidis ATCC 12228 (MIC=2 uM), E.casseliflavus ATCC 700327 (MIC=16 uM), S.aureus ATCC 25923 (MIC=4 uM) and E.faecalis ATCC 29212 (MIC=8 uM), and the Gram-negative bacteria E.coli ATCC 25922 (MIC=16 uM) and K.pneumoniae ATCC 13883 (MIC=4 uM). Displays antiprotozoal activity against the epimastigote form of T.cruzi (IC(50)=15.9 uM). Does not show antimicrobial activity against the Gram-negative bacterium P.aeruginosa ATCC 27853, or the fungi C.albicans ATCC 90028 and C.parapsilosis ATCC 22019. Shows high cytolytic activity against human erythrocytes (HC(50)=10 uM), and displays anti-proliferative effects against various cancer cell lines including MCF-7 breast cancer cells (IC(50)=13.7 uM), HeLa cervical adenocarcinoma cells (IC(50)=11.1 uM) and B16F10 murine melanoma cells (IC(50)=10.5 uM). This is Figainin 1 from Boana raniceps (Chaco tree frog).